The chain runs to 384 residues: Dual-specificity RNA methyltransferase RlmN (384 aa).

The active-site Proton acceptor is the glutamate 105. Positions 111–350 constitute a Radical SAM core domain; it reads EDDRATLCVS…TIVRKTRGDD (240 aa). Residues cysteine 118 and cysteine 355 are joined by a disulfide bond. Residues cysteine 125, cysteine 129, and cysteine 132 each coordinate [4Fe-4S] cluster. S-adenosyl-L-methionine is bound by residues 179 to 180, serine 211, 233 to 235, and asparagine 312; these read GE and SLH. Cysteine 355 serves as the catalytic S-methylcysteine intermediate.

This sequence belongs to the radical SAM superfamily. RlmN family. The cofactor is [4Fe-4S] cluster.

It localises to the cytoplasm. The enzyme catalyses adenosine(2503) in 23S rRNA + 2 reduced [2Fe-2S]-[ferredoxin] + 2 S-adenosyl-L-methionine = 2-methyladenosine(2503) in 23S rRNA + 5'-deoxyadenosine + L-methionine + 2 oxidized [2Fe-2S]-[ferredoxin] + S-adenosyl-L-homocysteine. It catalyses the reaction adenosine(37) in tRNA + 2 reduced [2Fe-2S]-[ferredoxin] + 2 S-adenosyl-L-methionine = 2-methyladenosine(37) in tRNA + 5'-deoxyadenosine + L-methionine + 2 oxidized [2Fe-2S]-[ferredoxin] + S-adenosyl-L-homocysteine. Its function is as follows. Specifically methylates position 2 of adenine 2503 in 23S rRNA and position 2 of adenine 37 in tRNAs. m2A2503 modification seems to play a crucial role in the proofreading step occurring at the peptidyl transferase center and thus would serve to optimize ribosomal fidelity. The protein is Dual-specificity RNA methyltransferase RlmN of Escherichia coli O6:H1 (strain CFT073 / ATCC 700928 / UPEC).